Reading from the N-terminus, the 230-residue chain is Enolase-phosphatase E1 (230 aa).

This sequence belongs to the HAD-like hydrolase superfamily. MasA/MtnC family. As to quaternary structure, monomer. The cofactor is Mg(2+).

The enzyme catalyses 5-methylsulfanyl-2,3-dioxopentyl phosphate + H2O = 1,2-dihydroxy-5-(methylsulfanyl)pent-1-en-3-one + phosphate. It participates in amino-acid biosynthesis; L-methionine biosynthesis via salvage pathway; L-methionine from S-methyl-5-thio-alpha-D-ribose 1-phosphate: step 3/6. Its pathway is amino-acid biosynthesis; L-methionine biosynthesis via salvage pathway; L-methionine from S-methyl-5-thio-alpha-D-ribose 1-phosphate: step 4/6. In terms of biological role, bifunctional enzyme that catalyzes the enolization of 2,3-diketo-5-methylthiopentyl-1-phosphate (DK-MTP-1-P) into the intermediate 2-hydroxy-3-keto-5-methylthiopentenyl-1-phosphate (HK-MTPenyl-1-P), which is then dephosphorylated to form the acireductone 1,2-dihydroxy-3-keto-5-methylthiopentene (DHK-MTPene). This chain is Enolase-phosphatase E1, found in Marinobacter nauticus (strain ATCC 700491 / DSM 11845 / VT8) (Marinobacter aquaeolei).